The chain runs to 90 residues: NELL2-interacting cell ontogeny regulator 1 (90 aa).

Positions 1 to 28 (MAPALRSLLSPRTLLLLLLSLALLGARA) are cleaved as a signal peptide.

It belongs to the NICOL family. As to quaternary structure, interacts with NELL2; triggers epididymal differentiation. Interacts with cell surface receptor TFRC; the interaction mediates uptake of NICOL1 into fibroblasts. As to expression, expression is enriched in both male and female reproductive organs, including the testis, epididymis, seminal vesicles, coagulating glands, ovary and uterus, and in various non-reproductive organs such as brain, thymus and liver. In testis, expressed in both germ cells and Sertoli cells. Also expressed at low levels in the kidney. Expressed during neocortex and cerebellum development.

The protein resides in the secreted. It localises to the cytoplasm. Its subcellular location is the perinuclear region. MRNA-binding protein which interacts with a range of target mRNAs including SERPINE1, ACTA2, CCN2 and COL4A1 and may promote extracellular matrix production. Binds to the 3'-UTR of SERPINE1 mRNA and stabilizes the mRNA, possibly by competing for binding with SERBP1 and preventing SERBP1-mediated mRNA degradation. Also binds to the 3'-UTR of ACTA2. Testis-derived lumicrine factor that triggers epididymal differentiation and sperm maturation. The chain is NELL2-interacting cell ontogeny regulator 1 from Mus musculus (Mouse).